Here is a 109-residue protein sequence, read N- to C-terminus: U16-hexatoxin-Hi1a (109 aa).

The signal sequence occupies residues 1 to 16; that stretch reads LTGHLCCMMIWWQATQ. A propeptide spanning residues 17 to 43 is cleaved from the precursor; it reads VISPPLPVIREENNSHKMGVSLFPLKR.

Contains 2 disulfide bonds. Expressed by the venom gland.

The protein localises to the secreted. Probable ion channel inhibitor. The polypeptide is U16-hexatoxin-Hi1a (Hadronyche infensa (Fraser island funnel-web spider)).